Reading from the N-terminus, the 292-residue chain is NAD kinase (292 aa).

Residue aspartate 72 is the Proton acceptor of the active site. NAD(+) contacts are provided by residues aspartate 72–glycine 73, asparagine 146–glutamate 147, histidine 157, arginine 174, aspartate 176, and threonine 187–serine 192.

This sequence belongs to the NAD kinase family. It depends on a divalent metal cation as a cofactor.

Its subcellular location is the cytoplasm. It catalyses the reaction NAD(+) + ATP = ADP + NADP(+) + H(+). Its function is as follows. Involved in the regulation of the intracellular balance of NAD and NADP, and is a key enzyme in the biosynthesis of NADP. Catalyzes specifically the phosphorylation on 2'-hydroxyl of the adenosine moiety of NAD to yield NADP. This is NAD kinase from Shewanella woodyi (strain ATCC 51908 / MS32).